Consider the following 328-residue polypeptide: Integrator complex subunit 12 (328 aa).

The sufficient for binding to IntS1 and IntS9 and for 3'-end snRNA processing stretch occupies residues 1–45 (MAANIAAAAAAAQEVDPVLKKAIKLLHSSNPTSAAELRLLLDEAL). The PHD-type zinc finger occupies 128 to 185 (DLNCCVCGEMVFTATNRLIECSKCGAMYHQECHKPPITKEEAADDQEQNWQCDTCCNK). 4 stretches are compositionally biased toward low complexity: residues 215–233 (KAKSSVASSRSSNSSNSSS), 241–264 (SSSTNASSSSSSKHGHKSSSSSSS), 274–283 (KSTAASSLSA), and 292–311 (SSGTSSRRSGSSTKSSSKSS). A disordered region spans residues 215 to 328 (KAKSSVASSR…GSSSKRRSKQ (114 aa)).

Belongs to the Integrator subunit 12 family. In terms of assembly, belongs to the multiprotein complex Integrator, at least composed of IntS1, IntS2, IntS3, IntS4, omd/IntS5, IntS6, defl/IntS7, IntS8, IntS9, IntS10, IntS11, IntS12, asun/IntS13, IntS14 and IntS15. The core complex associates with protein phosphatase 2A subunits mts/PP2A and Pp2A-29B, to form the Integrator-PP2A (INTAC) complex. Within the complex, interacts with IntS1 and IntS9. Interaction with IntS1 is likely to be important for promoting 3'-end processing of snRNAs.

The protein localises to the nucleus. In terms of biological role, component of the integrator complex, a multiprotein complex that terminates RNA polymerase II (Pol II) transcription in the promoter-proximal region of genes. The integrator complex provides a quality checkpoint during transcription elongation by driving premature transcription termination of transcripts that are unfavorably configured for transcriptional elongation: the complex terminates transcription by (1) catalyzing dephosphorylation of the C-terminal domain (CTD) of Pol II subunit Polr2A/Rbp1 and Spt5, and (2) degrading the exiting nascent RNA transcript via endonuclease activity. The integrator complex is also involved in the 3'-end processing of the U7 snRNA, and also the spliceosomal snRNAs U1, U2, U4 and U5. Required for the normal expression of the Integrator complex component IntS1. This chain is Integrator complex subunit 12, found in Drosophila melanogaster (Fruit fly).